Here is a 293-residue protein sequence, read N- to C-terminus: MKI67 FHA domain-interacting nucleolar phosphoprotein (293 aa).

Ala-2 carries the post-translational modification N-acetylalanine. A Glycyl lysine isopeptide (Lys-Gly) (interchain with G-Cter in SUMO2) cross-link involves residue Lys-38. In terms of domain architecture, RRM spans 45-123 (GVVYVRHLPN…RLLECHFMPP (79 aa)). An Omega-N-methylarginine; by PRMT1 and PRMT8 modification is found at Arg-114. Lys-139 is covalently cross-linked (Glycyl lysine isopeptide (Lys-Gly) (interchain with G-Cter in SUMO2)). Ser-145 bears the Phosphoserine mark. Residues Lys-179 and Lys-192 each participate in a glycyl lysine isopeptide (Lys-Gly) (interchain with G-Cter in SUMO2) cross-link. Over residues 197-207 (SKTNRQTSTKG) the composition is skewed to polar residues. The tract at residues 197-239 (SKTNRQTSTKGQVLRKKKKKVSGTLDTPEKTVDSQGPTPVCTP) is disordered. At Ser-218 the chain carries Phosphoserine. Thr-223 bears the Phosphothreonine mark. Residues 226–269 (KTVDSQGPTPVCTPTFLERRKSQVAELNDDDKDDEIVFKQPISC) are interaction with MKI67. At Ser-230 the chain carries Phosphoserine. Phosphothreonine is present on residues Thr-234 and Thr-238. Omega-N-methylated arginine; by PRMT1 and PRMT8 occurs at positions 244 and 245. A Phosphoserine modification is found at Ser-247. Lys-271 participates in a covalent cross-link: Glycyl lysine isopeptide (Lys-Gly) (interchain with G-Cter in SUMO1); alternate. Lys-271 is covalently cross-linked (Glycyl lysine isopeptide (Lys-Gly) (interchain with G-Cter in SUMO2); alternate). The segment at 271-293 (KEEIQETQTPTHSRKKRRRSSNQ) is disordered. Thr-279 carries the phosphothreonine modification. Basic residues predominate over residues 282–293 (HSRKKRRRSSNQ). Arg-284 bears the Omega-N-methylarginine; by PRMT1 and PRMT8 mark.

In terms of assembly, binds to the FHA domain of MKI67; this interaction is enhanced in mitosis. Sequentially phosphorylated on Thr-238, Thr-234 and Ser-230. Thr-234 is phosphorylated only when Thr-238 is phosphorylated. Likewise, phosphorylation at Ser-230 requires that Thr-234 and Thr-238 are phosphorylated. Phosphorylation enhances MKI67 binding.

It localises to the nucleus. It is found in the nucleolus. Its subcellular location is the chromosome. The chain is MKI67 FHA domain-interacting nucleolar phosphoprotein (NIFK) from Homo sapiens (Human).